A 184-amino-acid chain; its full sequence is ATP synthase subunit b, chloroplastic (184 aa).

The helical transmembrane segment at 29 to 49 (INIINLGIVIGLLVYLGEGVL) threads the bilayer.

The protein belongs to the ATPase B chain family. F-type ATPases have 2 components, F(1) - the catalytic core - and F(0) - the membrane proton channel. F(1) has five subunits: alpha(3), beta(3), gamma(1), delta(1), epsilon(1). F(0) has four main subunits: a(1), b(1), b'(1) and c(10-14). The alpha and beta chains form an alternating ring which encloses part of the gamma chain. F(1) is attached to F(0) by a central stalk formed by the gamma and epsilon chains, while a peripheral stalk is formed by the delta, b and b' chains.

It is found in the plastid. The protein resides in the chloroplast thylakoid membrane. F(1)F(0) ATP synthase produces ATP from ADP in the presence of a proton or sodium gradient. F-type ATPases consist of two structural domains, F(1) containing the extramembraneous catalytic core and F(0) containing the membrane proton channel, linked together by a central stalk and a peripheral stalk. During catalysis, ATP synthesis in the catalytic domain of F(1) is coupled via a rotary mechanism of the central stalk subunits to proton translocation. Functionally, component of the F(0) channel, it forms part of the peripheral stalk, linking F(1) to F(0). This chain is ATP synthase subunit b, chloroplastic, found in Psilotum nudum (Whisk fern).